A 145-amino-acid chain; its full sequence is Small ribosomal subunit protein uS12 (145 aa).

Belongs to the universal ribosomal protein uS12 family. As to quaternary structure, part of the 30S ribosomal subunit.

In terms of biological role, with S4 and S5 plays an important role in translational accuracy. Located at the interface of the 30S and 50S subunits. This chain is Small ribosomal subunit protein uS12, found in Cenarchaeum symbiosum (strain A).